The chain runs to 404 residues: Proteasomal ubiquitin receptor ADRM1-A (404 aa).

Residues serine 17–proline 130 form the Pru domain. Residues glycine 195 to serine 247 are compositionally biased toward low complexity. Disordered stretches follow at residues glycine 195–threonine 258 and phenylalanine 376–aspartate 404. The span at asparagine 248–threonine 258 shows a compositional bias: polar residues. One can recognise a DEUBAD domain in the interval threonine 278–glutamate 390. Residues glutamine 386–lysine 395 show a composition bias toward basic and acidic residues.

Belongs to the ADRM1 family. Component of the 19S proteasome regulatory particle complex. The 26S proteasome consists of a 20S core particle (CP) and two 19S regulatory subunits (RP).

It localises to the cytoplasm. The protein resides in the nucleus. Functionally, component of the 26S proteasome, a multiprotein complex involved in the ATP-dependent degradation of ubiquitinated proteins. This complex plays a key role in the maintenance of protein homeostasis by removing misfolded or damaged proteins, which could impair cellular functions, and by removing proteins whose functions are no longer required. Therefore, the proteasome participates in numerous cellular processes, including cell cycle progression, apoptosis, or DNA damage repair. Within the complex, functions as a proteasomal ubiquitin receptor. This chain is Proteasomal ubiquitin receptor ADRM1-A (adrm1-a), found in Xenopus laevis (African clawed frog).